The sequence spans 583 residues: RuBisCO large subunit-binding protein subunit alpha, chloroplastic (583 aa).

Positions 1 to 14 are enriched in polar residues; sequence MATANALSSPSVLC. Residues 1–35 form a disordered region; it reads MATANALSSPSVLCSSRQGKLSGGSQQKGQRVSYR. Residues 1–45 constitute a chloroplast transit peptide; the sequence is MATANALSSPSVLCSSRQGKLSGGSQQKGQRVSYRKANRRFSLRA. Low complexity predominate over residues 15–31; it reads SSRQGKLSGGSQQKGQR. Serine 89 is modified (phosphoserine).

This sequence belongs to the chaperonin (HSP60) family. In terms of assembly, oligomer of probably six alpha and six beta subunits.

It is found in the plastid. It localises to the chloroplast. This protein binds RuBisCO small and large subunits and is implicated in the assembly of the enzyme oligomer. The polypeptide is RuBisCO large subunit-binding protein subunit alpha, chloroplastic (Brassica napus (Rape)).